The primary structure comprises 40 residues: Photosystem II reaction center protein J (40 aa).

Residues 8–28 (IPLWIVGTVTGILVIGLIGVF) traverse the membrane as a helical segment.

This sequence belongs to the PsbJ family. As to quaternary structure, PSII is composed of 1 copy each of membrane proteins PsbA, PsbB, PsbC, PsbD, PsbE, PsbF, PsbH, PsbI, PsbJ, PsbK, PsbL, PsbM, PsbT, PsbX, PsbY, PsbZ, Psb30/Ycf12, at least 3 peripheral proteins of the oxygen-evolving complex and a large number of cofactors. It forms dimeric complexes.

The protein localises to the plastid. It is found in the chloroplast thylakoid membrane. In terms of biological role, one of the components of the core complex of photosystem II (PSII). PSII is a light-driven water:plastoquinone oxidoreductase that uses light energy to abstract electrons from H(2)O, generating O(2) and a proton gradient subsequently used for ATP formation. It consists of a core antenna complex that captures photons, and an electron transfer chain that converts photonic excitation into a charge separation. The sequence is that of Photosystem II reaction center protein J from Coffea arabica (Arabian coffee).